The chain runs to 251 residues: ATP synthase subunit a (251 aa).

6 helical membrane-spanning segments follow: residues 30 to 50, 86 to 106, 116 to 136, 145 to 165, 195 to 215, and 219 to 239; these read NSNE…VVAL, FFPF…LGLF, IAIT…VGFW, FFSP…IEIV, FMLM…IIPL, and IALT…FAIL.

It belongs to the ATPase A chain family. As to quaternary structure, F-type ATPases have 2 components, CF(1) - the catalytic core - and CF(0) - the membrane proton channel. CF(1) has five subunits: alpha(3), beta(3), gamma(1), delta(1), epsilon(1). CF(0) has three main subunits: a(1), b(2) and c(9-12). The alpha and beta chains form an alternating ring which encloses part of the gamma chain. CF(1) is attached to CF(0) by a central stalk formed by the gamma and epsilon chains, while a peripheral stalk is formed by the delta and b chains.

Its subcellular location is the cell inner membrane. Key component of the proton channel; it plays a direct role in the translocation of protons across the membrane. This Acidiphilium cryptum (strain JF-5) protein is ATP synthase subunit a.